The sequence spans 186 residues: Adenine phosphoribosyltransferase (186 aa).

It belongs to the purine/pyrimidine phosphoribosyltransferase family. As to quaternary structure, homodimer.

Its subcellular location is the cytoplasm. It carries out the reaction AMP + diphosphate = 5-phospho-alpha-D-ribose 1-diphosphate + adenine. It functions in the pathway purine metabolism; AMP biosynthesis via salvage pathway; AMP from adenine: step 1/1. Functionally, catalyzes a salvage reaction resulting in the formation of AMP, that is energically less costly than de novo synthesis. The protein is Adenine phosphoribosyltransferase of Sulfurovum sp. (strain NBC37-1).